The primary structure comprises 105 residues: uncharacterized protein (105 aa).

3 consecutive transmembrane segments (helical) span residues 14–34, 41–61, and 80–100; these read ILLMLRLAVTAVAVFLAIVAW, ETVCFIAGVLCMYLAQLFAFL, and VGFTLELLPLACFIASLIFTI.

It is found in the cell membrane. This is an uncharacterized protein from Treponema pallidum (strain Nichols).